The chain runs to 484 residues: Malonate-semialdehyde dehydrogenase 3 (484 aa).

The NAD(+) site is built by Phe152, Lys176, Glu179, Arg180, and Ser229. Residue Cys284 is the Nucleophile of the active site. Residue Glu384 coordinates NAD(+).

It belongs to the aldehyde dehydrogenase family. IolA subfamily. Homotetramer.

It catalyses the reaction 3-oxopropanoate + NAD(+) + CoA + H2O = hydrogencarbonate + acetyl-CoA + NADH + H(+). It carries out the reaction 2-methyl-3-oxopropanoate + NAD(+) + CoA + H2O = propanoyl-CoA + hydrogencarbonate + NADH + H(+). It participates in polyol metabolism; myo-inositol degradation into acetyl-CoA; acetyl-CoA from myo-inositol: step 7/7. Functionally, catalyzes the oxidation of malonate semialdehyde (MSA) and methylmalonate semialdehyde (MMSA) into acetyl-CoA and propanoyl-CoA, respectively. Is involved in a myo-inositol catabolic pathway. Bicarbonate, and not CO2, is the end-product of the enzymatic reaction. The sequence is that of Malonate-semialdehyde dehydrogenase 3 from Geobacillus kaustophilus (strain HTA426).